The following is a 235-amino-acid chain: Hydroxyacylglutathione hydrolase (235 aa).

H53, H55, D57, H58, H109, D127, and H165 together coordinate Zn(2+).

The protein belongs to the metallo-beta-lactamase superfamily. Glyoxalase II family. In terms of assembly, monomer. Requires Zn(2+) as cofactor.

The catalysed reaction is an S-(2-hydroxyacyl)glutathione + H2O = a 2-hydroxy carboxylate + glutathione + H(+). Its pathway is secondary metabolite metabolism; methylglyoxal degradation; (R)-lactate from methylglyoxal: step 2/2. Its function is as follows. Thiolesterase that catalyzes the hydrolysis of S-D-lactoyl-glutathione to form glutathione and D-lactic acid. This Haemophilus ducreyi (strain 35000HP / ATCC 700724) protein is Hydroxyacylglutathione hydrolase.